A 557-amino-acid polypeptide reads, in one-letter code: Membrane protein insertase YidC (557 aa).

The helical transmembrane segment at 3-23 (NLRPVLYLSMLLVLFLIWQAW) threads the bilayer. Positions 34–60 (APGAQEQVMDRDGVPAPPQDVPDAPVS) are disordered. The next 4 membrane-spanning stretches (helical) occupy residues 366 to 386 (VVGNWGWAIIILTILIKLVFY), 436 to 456 (LGGCLPILVQIPVFIALYWVL), 480 to 500 (YFILPILMGVTMIAQYKLNPA), and 514 to 534 (PFVFTVFFAFFPAGLVLYWFV).

This sequence belongs to the OXA1/ALB3/YidC family. Type 1 subfamily. As to quaternary structure, interacts with the Sec translocase complex via SecD. Specifically interacts with transmembrane segments of nascent integral membrane proteins during membrane integration.

The protein resides in the cell inner membrane. In terms of biological role, required for the insertion and/or proper folding and/or complex formation of integral membrane proteins into the membrane. Involved in integration of membrane proteins that insert both dependently and independently of the Sec translocase complex, as well as at least some lipoproteins. Aids folding of multispanning membrane proteins. The sequence is that of Membrane protein insertase YidC from Thioalkalivibrio sulfidiphilus (strain HL-EbGR7).